The sequence spans 255 residues: MRLIALPAFDDNYIWALIAADGRAIIVDPGQAEPVLAAAQHQGLVPSAVLLTHHHGDHIGGVAELQQRWPDLELFGPADERIPADAHQVGHGERLRLLDVEFQVLQVPGHTRSHIAFVADGYLFSGDTLFSLGCGRMFEGTAPQMFDSLQRLASLPGETLVCCGHEYTLANAAFALHVDPTNAALQRRQQEAQAMRHAARPTLPISLKSELATNPFLRTGRPEIRAAVAPRAAGELSSEVDVFAELRRWKDEFRS.

Residues His-53, His-55, Asp-57, His-58, His-110, Asp-127, and His-165 each coordinate Zn(2+).

This sequence belongs to the metallo-beta-lactamase superfamily. Glyoxalase II family. Monomer. Zn(2+) serves as cofactor.

The catalysed reaction is an S-(2-hydroxyacyl)glutathione + H2O = a 2-hydroxy carboxylate + glutathione + H(+). It functions in the pathway secondary metabolite metabolism; methylglyoxal degradation; (R)-lactate from methylglyoxal: step 2/2. Functionally, thiolesterase that catalyzes the hydrolysis of S-D-lactoyl-glutathione to form glutathione and D-lactic acid. The sequence is that of Hydroxyacylglutathione hydrolase from Xanthomonas euvesicatoria pv. vesicatoria (strain 85-10) (Xanthomonas campestris pv. vesicatoria).